The sequence spans 281 residues: Ribosomal protein L11 methyltransferase (281 aa).

Residues Thr-133, Gly-154, Asp-175, and Asn-216 each contribute to the S-adenosyl-L-methionine site.

The protein belongs to the methyltransferase superfamily. PrmA family.

The protein resides in the cytoplasm. The catalysed reaction is L-lysyl-[protein] + 3 S-adenosyl-L-methionine = N(6),N(6),N(6)-trimethyl-L-lysyl-[protein] + 3 S-adenosyl-L-homocysteine + 3 H(+). In terms of biological role, methylates ribosomal protein L11. The chain is Ribosomal protein L11 methyltransferase from Campylobacter jejuni subsp. jejuni serotype O:23/36 (strain 81-176).